The primary structure comprises 139 residues: Large-conductance mechanosensitive channel (139 aa).

The next 2 membrane-spanning stretches (helical) occupy residues 16 to 36 (VIDL…VKSL) and 79 to 99 (GAFV…FLLV).

This sequence belongs to the MscL family. Homopentamer.

Its subcellular location is the cell inner membrane. Channel that opens in response to stretch forces in the membrane lipid bilayer. May participate in the regulation of osmotic pressure changes within the cell. This Caulobacter vibrioides (strain ATCC 19089 / CIP 103742 / CB 15) (Caulobacter crescentus) protein is Large-conductance mechanosensitive channel.